Here is a 467-residue protein sequence, read N- to C-terminus: tRNA-2-methylthio-N(6)-dimethylallyladenosine synthase (467 aa).

The region spanning 2–118 (PSVFIKTFGC…VAEIADNLLK (117 aa)) is the MTTase N-terminal domain. 6 residues coordinate [4Fe-4S] cluster: Cys11, Cys47, Cys81, Cys159, Cys163, and Cys166. A Radical SAM core domain is found at 145 to 379 (TKAQPIAYVS…LEIQNKITME (235 aa)). Positions 382–445 (QKWVGQVVEI…GHTFYGTPLI (64 aa)) constitute a TRAM domain.

The protein belongs to the methylthiotransferase family. MiaB subfamily. Monomer. The cofactor is [4Fe-4S] cluster.

It localises to the cytoplasm. It carries out the reaction N(6)-dimethylallyladenosine(37) in tRNA + (sulfur carrier)-SH + AH2 + 2 S-adenosyl-L-methionine = 2-methylsulfanyl-N(6)-dimethylallyladenosine(37) in tRNA + (sulfur carrier)-H + 5'-deoxyadenosine + L-methionine + A + S-adenosyl-L-homocysteine + 2 H(+). In terms of biological role, catalyzes the methylthiolation of N6-(dimethylallyl)adenosine (i(6)A), leading to the formation of 2-methylthio-N6-(dimethylallyl)adenosine (ms(2)i(6)A) at position 37 in tRNAs that read codons beginning with uridine. This Methylacidiphilum infernorum (isolate V4) (Methylokorus infernorum (strain V4)) protein is tRNA-2-methylthio-N(6)-dimethylallyladenosine synthase.